A 1278-amino-acid polypeptide reads, in one-letter code: Mediator of RNA polymerase II transcription subunit 16 (1278 aa).

Residues 1 to 10 (MNQQNPEEEV) are compositionally biased toward acidic residues. 3 disordered regions span residues 1–21 (MNQQ…GGGI), 530–557 (TKDF…GDEK), and 839–861 (SAGT…SPAT). The span at 547–557 (APKEPDSGDEK) shows a compositional bias: basic and acidic residues. Polar residues predominate over residues 841 to 861 (GTGSNRNNVTSPTQNASSPAT).

This sequence belongs to the plant Mediator complex subunit 16 family. Component of the Mediator complex.

Its subcellular location is the nucleus. Functionally, component of the Mediator complex, a coactivator involved in the regulated transcription of nearly all RNA polymerase II-dependent genes. Mediator functions as a bridge to convey information from gene-specific regulatory proteins to the basal RNA polymerase II transcription machinery. The Mediator complex, having a compact conformation in its free form, is recruited to promoters by direct interactions with regulatory proteins and serves for the assembly of a functional preinitiation complex with RNA polymerase II and the general transcription factors. Involved in the regulation of the circadian clock, in the control of flowering time, in freezing- and osmotic-stress tolerance and in both salicylic acid- and jasmonate-mediated defense gene expression. This chain is Mediator of RNA polymerase II transcription subunit 16 (MED16), found in Arabidopsis thaliana (Mouse-ear cress).